A 93-amino-acid polypeptide reads, in one-letter code: Large ribosomal subunit protein uL23 (93 aa).

The protein belongs to the universal ribosomal protein uL23 family. In terms of assembly, part of the 50S ribosomal subunit. Contacts protein L29, and trigger factor when it is bound to the ribosome.

In terms of biological role, one of the early assembly proteins it binds 23S rRNA. One of the proteins that surrounds the polypeptide exit tunnel on the outside of the ribosome. Forms the main docking site for trigger factor binding to the ribosome. The protein is Large ribosomal subunit protein uL23 of Campylobacter jejuni subsp. doylei (strain ATCC BAA-1458 / RM4099 / 269.97).